The following is a 407-amino-acid chain: MSAPKKVVLAYSGGLDTSIILKWLQTEYGCEVVTFTADLGQGEELEPARKKAEMMGAAGIYVEDLREEFVRDFVFPMFRANALYEGLYLLGTSIARPLISKRLVEIAEETGADAVSHGATGKGNDQVRFELCAYSLNPEIEVIAPWRKWELGSRTKLIEFAEKHQIPIAKDKRGEAPFSVDANLLHTSSEGKMLEDPAEEAPDHILQRITRPEDAPDTPEMVEITFEKGDAVAINGEPMSPATILTELNRLGGKHGIGILDLVENRFVGMKSRGIYETPGGTVLLEAHRGIEQITLDGASGHLKDSIMPRYAELIYNGFWFSPEREMLQALIDKSQEHVTGTVRLKLYKGAARCVARWSDHSLYSEAHVTFEEDMGAYDQSDAQGFIQLNALRLKLLSARNRKFNGS.

ATP contacts are provided by residues 10–18 and A37; that span reads AYSGGLDTS. 2 residues coordinate L-citrulline: Y88 and S93. G118 is an ATP binding site. L-aspartate-binding residues include T120, N124, and D125. L-citrulline is bound at residue N124. The L-citrulline site is built by R128, S179, S188, E264, and Y276.

This sequence belongs to the argininosuccinate synthase family. Type 1 subfamily. Homotetramer.

It localises to the cytoplasm. It carries out the reaction L-citrulline + L-aspartate + ATP = 2-(N(omega)-L-arginino)succinate + AMP + diphosphate + H(+). It participates in amino-acid biosynthesis; L-arginine biosynthesis; L-arginine from L-ornithine and carbamoyl phosphate: step 2/3. The polypeptide is Argininosuccinate synthase (Jannaschia sp. (strain CCS1)).